We begin with the raw amino-acid sequence, 1388 residues long: ABC transporter G family member 52 (1388 aa).

The interval 1-24 is disordered; sequence MDDAGEICSFSRSSSSAREDDEED. The ABC transporter 1 domain occupies 135 to 406; the sequence is TNALCITKKI…FKSVGFKCPE (272 aa). 168–175 serves as a coordination point for ATP; it reads GPPGSGKT. In terms of domain architecture, ABC transmembrane type-2 1 spans 484 to 697; that stretch reads ELLKANIYRE…ALNALAVNEF (214 aa). 7 helical membrane-spanning segments follow: residues 503–523, 541–561, 590–610, 621–641, 646–666, 675–695, and 732–752; these read LYIF…TVFI, ALFY…GPAI, IPIS…VIGF, FLVL…IVAL, VIAS…CGFI, WWIW…LAVN, and ISIG…TICL. Residues 791 to 1043 enclose the ABC transporter 2 domain; that stretch reads ITFEDIRYSV…ELIKYFEAIQ (253 aa). 836 to 843 is a binding site for ATP; the sequence is GVSGAGKT. The ABC transmembrane type-2 2 domain occupies 1116 to 1330; it reads TQWLACLWKQ…TLNGLLTSQF (215 aa). The next 7 membrane-spanning stretches (helical) occupy residues 1136–1156, 1167–1183, 1223–1243, 1250–1270, 1280–1300, 1305–1325, and 1357–1377; these read IVVR…MFWG, LFSI…AMGV, FPYI…MVGY, FLWY…YGMM, MSAV…GFLI, IPVW…LNGL, and LLWV…FLFG.

It belongs to the ABC transporter superfamily. ABCG family. PDR (TC 3.A.1.205) subfamily.

The protein localises to the membrane. May be a general defense protein. The protein is ABC transporter G family member 52 of Oryza sativa subsp. japonica (Rice).